The primary structure comprises 312 residues: Protein-methionine-sulfoxide reductase catalytic subunit MsrP (312 aa).

The segment at residues 1–45 is a signal peptide (tat-type signal); the sequence is MPVYRPPRIAASEITPERFFLDRRSFLAAAGGLVLGGTGMAHAAA. Residues N69, 72–73, C126, T161, N211, R216, and 227–229 contribute to the Mo-molybdopterin site; these read YE and GIK.

The protein belongs to the MsrP family. As to quaternary structure, heterodimer of a catalytic subunit (MsrP) and a heme-binding subunit (MsrQ). Mo-molybdopterin is required as a cofactor. Post-translationally, predicted to be exported by the Tat system. The position of the signal peptide cleavage has not been experimentally proven.

It localises to the periplasm. It carries out the reaction L-methionyl-[protein] + a quinone + H2O = L-methionyl-(S)-S-oxide-[protein] + a quinol. It catalyses the reaction L-methionyl-[protein] + a quinone + H2O = L-methionyl-(R)-S-oxide-[protein] + a quinol. Functionally, part of the MsrPQ system that repairs oxidized periplasmic proteins containing methionine sulfoxide residues (Met-O), using respiratory chain electrons. Thus protects these proteins from oxidative-stress damage caused by reactive species of oxygen and chlorine generated by the host defense mechanisms. MsrPQ is essential for the maintenance of envelope integrity under bleach stress, rescuing a wide series of structurally unrelated periplasmic proteins from methionine oxidation. The catalytic subunit MsrP is non-stereospecific, being able to reduce both (R-) and (S-) diastereoisomers of methionine sulfoxide. The chain is Protein-methionine-sulfoxide reductase catalytic subunit MsrP from Sinorhizobium fredii (strain NBRC 101917 / NGR234).